The following is a 109-amino-acid chain: Iron-sulfur cluster assembly protein CyaY (109 aa).

This sequence belongs to the frataxin family.

Involved in iron-sulfur (Fe-S) cluster assembly. May act as a regulator of Fe-S biogenesis. In Bordetella avium (strain 197N), this protein is Iron-sulfur cluster assembly protein CyaY.